A 377-amino-acid polypeptide reads, in one-letter code: Lactosylceramide 1,3-N-acetyl-beta-D-glucosaminyltransferase (377 aa).

Topologically, residues 1 to 14 (MRVFVSSRRVKRWQ) are cytoplasmic. Residues 15–35 (FFHLFAICFILSFMVFWGPIN) traverse the membrane as a helical; Signal-anchor for type II membrane protein segment. Over 36 to 377 (NYIMSHMKSY…NSYPCRAAFA (342 aa)) the chain is Lumenal. Residue asparagine 58 is glycosylated (N-linked (GlcNAc...) asparagine).

The protein belongs to the glycosyltransferase 31 family.

It is found in the golgi apparatus membrane. It carries out the reaction a beta-D-Gal-(1-&gt;4)-beta-D-Glc-(1&lt;-&gt;1)-Cer(d18:1(4E)) + UDP-N-acetyl-alpha-D-glucosamine = a beta-D-GlcNAc-(1-&gt;3)-beta-D-Gal-(1-&gt;4)-beta-D-Glc-(1&lt;-&gt;1)-Cer(d18:1(4E)) + UDP + H(+). It catalyses the reaction a neolactoside nLc4Cer(d18:1(4E)) + UDP-N-acetyl-alpha-D-glucosamine = a neolactoside IV(3)-beta-GlcNAc-nLc4Cer(d18:1(4E)) + UDP + H(+). The protein operates within protein modification; protein glycosylation. Beta-1,3-N-acetylglucosaminyltransferase that plays a key role in the synthesis of lacto- or neolacto-series carbohydrate chains on glycolipids, notably by participating in biosynthesis of HNK-1 and Lewis X carbohydrate structures. Has strong activity toward lactosylceramide (LacCer) and neolactotetraosylceramide (nLc(4)Cer; paragloboside), resulting in the synthesis of Lc(3)Cer and neolactopentaosylceramide (nLc(5)Cer), respectively. Probably plays a central role in regulating neolacto-series glycolipid synthesis during embryonic development. This is Lactosylceramide 1,3-N-acetyl-beta-D-glucosaminyltransferase from Rattus norvegicus (Rat).